The sequence spans 318 residues: HPr kinase/phosphorylase (318 aa).

Residues histidine 143 and lysine 164 contribute to the active site. Residue 158–165 coordinates ATP; that stretch reads GKSGVGKS. Serine 165 is a Mg(2+) binding site. Aspartate 182 acts as the Proton acceptor; for phosphorylation activity. Proton donor; for dephosphorylation activity in catalysis. The interval 206–215 is important for the catalytic mechanism of both phosphorylation and dephosphorylation; sequence MEIRGLGILN. Glutamate 207 is a binding site for Mg(2+). Residue arginine 248 is part of the active site. Residues 269–274 are important for the catalytic mechanism of dephosphorylation; the sequence is PVKPGR.

The protein belongs to the HPrK/P family. As to quaternary structure, homohexamer. Mg(2+) is required as a cofactor.

It catalyses the reaction [HPr protein]-L-serine + ATP = [HPr protein]-O-phospho-L-serine + ADP + H(+). The catalysed reaction is [HPr protein]-O-phospho-L-serine + phosphate + H(+) = [HPr protein]-L-serine + diphosphate. In terms of biological role, catalyzes the ATP- as well as the pyrophosphate-dependent phosphorylation of a specific serine residue in HPr, a phosphocarrier protein of the phosphoenolpyruvate-dependent sugar phosphotransferase system (PTS). HprK/P also catalyzes the pyrophosphate-producing, inorganic phosphate-dependent dephosphorylation (phosphorolysis) of seryl-phosphorylated HPr (P-Ser-HPr). The chain is HPr kinase/phosphorylase from Leptospira borgpetersenii serovar Hardjo-bovis (strain L550).